The following is a 1101-amino-acid chain: Coiled-coil domain-containing protein 150 (1101 aa).

Coiled-coil stretches lie at residues 106-299, 398-680, 712-940, and 970-1033; these read RLES…DLTS, AAHA…KEDN, DSEI…NYEQ, and VRNK…EAHR. Residues 1055 to 1071 show a composition bias toward basic and acidic residues; the sequence is SGEDRWQEKDQDVKHDV. Residues 1055-1101 form a disordered region; it reads SGEDRWQEKDQDVKHDVMSNQSVLHRWERKQNLRPMPKKYHSEVQRK.

The polypeptide is Coiled-coil domain-containing protein 150 (CCDC150) (Homo sapiens (Human)).